We begin with the raw amino-acid sequence, 212 residues long: MKRYFVTGTDTDCGKTFVTNQLVNYFSDSAAIKPIASGCEYSENQLVNSDALLHQQQNHLPMEIVNPWRFRLPVSPHLSAREDGASIDVHKVADYCLNLQVNDIKKLFIEGAGGLMVPLNEQDTWLDFLKLTRIPVILVVGMKLGCINHTLLSQEVLEINKIKCQGWIANCLDQDMLMLDENISTLEAKLNYPLLARTNYGGKISDICLSSL.

Position 12–17 (D12–F17) interacts with ATP. Mg(2+) is bound at residue T16. Residue K33 is part of the active site. S37 serves as a coordination point for substrate. ATP is bound by residues D50, E110 to G113, and N170 to C171. Mg(2+)-binding residues include D50 and E110.

This sequence belongs to the dethiobiotin synthetase family. Homodimer. The cofactor is Mg(2+).

The protein localises to the cytoplasm. The enzyme catalyses (7R,8S)-7,8-diammoniononanoate + CO2 + ATP = (4R,5S)-dethiobiotin + ADP + phosphate + 3 H(+). It participates in cofactor biosynthesis; biotin biosynthesis; biotin from 7,8-diaminononanoate: step 1/2. Its function is as follows. Catalyzes a mechanistically unusual reaction, the ATP-dependent insertion of CO2 between the N7 and N8 nitrogen atoms of 7,8-diaminopelargonic acid (DAPA, also called 7,8-diammoniononanoate) to form a ureido ring. The sequence is that of ATP-dependent dethiobiotin synthetase BioD from Legionella pneumophila subsp. pneumophila (strain Philadelphia 1 / ATCC 33152 / DSM 7513).